Consider the following 636-residue polypeptide: MPIINFNNKEILFNYPISIIEIIKKFDKNLSENCIAAKINGKLLDVSEIINYDGSLELVKPENKIGIRIIRCSCSHLLGYAIKQLWPTSKMATNNITENGFYYDIDLNHKLSKNDLKLIEKKMHQLLKINFKINKINVTWGKAYEMFKNLNEIYKIKILEDNISKNSSLYIYHQEQYVDLCTLPHVPNIKFCMFFKIQKISGAYWKGNKKNKMLQRIYVTSWDSNSKLKNFIKNIKELEHRDHRKIGKKLDLFHIYENSPGMVFWHHNGWIIFRILEKFIRKKLKKFYYQEVKTPCIIDHDLWRLSGHLDNYKNYMFHTNSENKQYCIKPMNCPAHVLIFKKKIRSYKELPFRISEFGSCHRNEPSGSLHGLMRIRNFTQDDAHIFCMHDQILSEVSSCIKMIYEVYSCFGFKKILVKLSTRPENRIGSDEIWDFAEKQLELSLKKNKILFKIDLNEGAFYGPKIEFTLLDSLNRKWQCGTIQLDLCLANKLQAYYINNKNEKTNPVIIHRAILGSMERFIGIITEEFSGKYPLWISPIQVGVINVSVDQIDYVKKITKFFLQKKIRIISDLRNEKISFKIREYTLRFIPYIIICGKKEMESNSISVRNKYGKQLKYSSLEKFYNVIYEEIKQKKT.

In terms of domain architecture, TGS spans 1-60 (MPIINFNNKEILFNYPISIIEIIKKFDKNLSENCIAAKINGKLLDVSEIINYDGSLELVK). The catalytic stretch occupies residues 242-533 (DHRKIGKKLD…ITEEFSGKYP (292 aa)). Residues C333, H384, and H510 each contribute to the Zn(2+) site.

It belongs to the class-II aminoacyl-tRNA synthetase family. Homodimer. Zn(2+) serves as cofactor.

The protein localises to the cytoplasm. It carries out the reaction tRNA(Thr) + L-threonine + ATP = L-threonyl-tRNA(Thr) + AMP + diphosphate + H(+). Its function is as follows. Catalyzes the attachment of threonine to tRNA(Thr) in a two-step reaction: L-threonine is first activated by ATP to form Thr-AMP and then transferred to the acceptor end of tRNA(Thr). Also edits incorrectly charged L-seryl-tRNA(Thr). The sequence is that of Threonine--tRNA ligase from Wigglesworthia glossinidia brevipalpis.